The primary structure comprises 427 residues: Peptidase B (427 aa).

Positions 195 and 200 each coordinate Mn(2+). Lysine 207 is an active-site residue. Aspartate 218, aspartate 277, and glutamate 279 together coordinate Mn(2+). Residue arginine 281 is part of the active site.

It belongs to the peptidase M17 family. Homohexamer. The cofactor is Mn(2+).

It is found in the cytoplasm. The enzyme catalyses Release of an N-terminal amino acid, Xaa, from a peptide or arylamide. Xaa is preferably Glu or Asp but may be other amino acids, including Leu, Met, His, Cys and Gln.. In terms of biological role, probably plays an important role in intracellular peptide degradation. This Escherichia coli O7:K1 (strain IAI39 / ExPEC) protein is Peptidase B.